The primary structure comprises 550 residues: Probable importin subunit alpha-A (550 aa).

The span at 1 to 30 shows a compositional bias: basic and acidic residues; it reads MSSRDKQDSRKKEFKKSLDSETARRKREEN. Positions 1–34 are disordered; sequence MSSRDKQDSRKKEFKKSLDSETARRKREENSIGI. The IBB domain occupies 1–56; sequence MSSRDKQDSRKKEFKKSLDSETARRKREENSIGIRKNAREELMLKRRGIVQPNPST. 8 ARM repeats span residues 116 to 155, 158 to 198, 201 to 241, 256 to 297, 300 to 339, 342 to 381, 385 to 424, and 428 to 467; these read YPPI…NIAS, NRQT…NIAG, VDSR…KIGL, KPQP…YLCD, NTKI…NIVT, SSQT…NITA, SQID…NSTN, and TKSI…NIIK.

Belongs to the importin alpha family. As to quaternary structure, forms a complex with tnpo/importin subunit beta.

The protein localises to the cytoplasm. Its subcellular location is the nucleus envelope. Functionally, functions in nuclear protein import via a substrate-importin alpha-beta transport complex that passes though the nuclear pore complexes (NPC). Binds specifically and directly to substrates containing either a simple or bipartite NLS motif. The sequence is that of Probable importin subunit alpha-A from Dictyostelium discoideum (Social amoeba).